The sequence spans 695 residues: DNA ligase (695 aa).

NAD(+) contacts are provided by residues 36–40 (DADYD), 85–86 (SL), and Glu-123. Lys-125 (N6-AMP-lysine intermediate) is an active-site residue. Residues Arg-146, Glu-182, Lys-318, and Lys-342 each contribute to the NAD(+) site. 4 residues coordinate Zn(2+): Cys-436, Cys-439, Cys-454, and Cys-460. Residues 617 to 695 (LQSGDLAGKT…EDGLKALLSQ (79 aa)) enclose the BRCT domain.

It belongs to the NAD-dependent DNA ligase family. LigA subfamily. Mg(2+) is required as a cofactor. Mn(2+) serves as cofactor.

The enzyme catalyses NAD(+) + (deoxyribonucleotide)n-3'-hydroxyl + 5'-phospho-(deoxyribonucleotide)m = (deoxyribonucleotide)n+m + AMP + beta-nicotinamide D-nucleotide.. Its function is as follows. DNA ligase that catalyzes the formation of phosphodiester linkages between 5'-phosphoryl and 3'-hydroxyl groups in double-stranded DNA using NAD as a coenzyme and as the energy source for the reaction. It is essential for DNA replication and repair of damaged DNA. This chain is DNA ligase, found in Bordetella avium (strain 197N).